We begin with the raw amino-acid sequence, 271 residues long: Thiazole synthase (271 aa).

Residue lysine 108 is the Schiff-base intermediate with DXP of the active site. 1-deoxy-D-xylulose 5-phosphate is bound by residues glycine 169, 195 to 196, and 217 to 218; these read AG and NS.

It belongs to the ThiG family. As to quaternary structure, homotetramer. Forms heterodimers with either ThiH or ThiS.

Its subcellular location is the cytoplasm. It carries out the reaction [ThiS sulfur-carrier protein]-C-terminal-Gly-aminoethanethioate + 2-iminoacetate + 1-deoxy-D-xylulose 5-phosphate = [ThiS sulfur-carrier protein]-C-terminal Gly-Gly + 2-[(2R,5Z)-2-carboxy-4-methylthiazol-5(2H)-ylidene]ethyl phosphate + 2 H2O + H(+). The protein operates within cofactor biosynthesis; thiamine diphosphate biosynthesis. Functionally, catalyzes the rearrangement of 1-deoxy-D-xylulose 5-phosphate (DXP) to produce the thiazole phosphate moiety of thiamine. Sulfur is provided by the thiocarboxylate moiety of the carrier protein ThiS. In vitro, sulfur can be provided by H(2)S. This chain is Thiazole synthase, found in Prochlorococcus marinus (strain SARG / CCMP1375 / SS120).